The chain runs to 607 residues: UvrABC system protein C (607 aa).

The GIY-YIG domain occupies 16-94 (GRPGVYRMFD…IKEWRPPYNI (79 aa)). The 36-residue stretch at 203-238 (NALTDELSTAMEAAASTLDFEKAAELRDQISLLRRV) folds into the UVR domain.

It belongs to the UvrC family. In terms of assembly, interacts with UvrB in an incision complex.

The protein localises to the cytoplasm. Its function is as follows. The UvrABC repair system catalyzes the recognition and processing of DNA lesions. UvrC both incises the 5' and 3' sides of the lesion. The N-terminal half is responsible for the 3' incision and the C-terminal half is responsible for the 5' incision. The sequence is that of UvrABC system protein C from Pseudomonas fluorescens (strain ATCC BAA-477 / NRRL B-23932 / Pf-5).